Reading from the N-terminus, the 360-residue chain is Phospho-N-acetylmuramoyl-pentapeptide-transferase (360 aa).

The next 10 membrane-spanning stretches (helical) occupy residues 21-41, 73-93, 98-118, 132-152, 168-188, 199-219, 236-256, 263-283, 288-308, and 338-358; these read YITF…LWIG, TMGG…WADL, VWFV…DDYW, WKYF…YAVG, FMPQ…VGTS, GLAI…AWAT, AGEL…FLWY, VFMG…IAVL, LLLV…ILQV, and VIVC…VTLK.

The protein belongs to the glycosyltransferase 4 family. MraY subfamily. The cofactor is Mg(2+).

The protein resides in the cell inner membrane. It carries out the reaction UDP-N-acetyl-alpha-D-muramoyl-L-alanyl-gamma-D-glutamyl-meso-2,6-diaminopimeloyl-D-alanyl-D-alanine + di-trans,octa-cis-undecaprenyl phosphate = di-trans,octa-cis-undecaprenyl diphospho-N-acetyl-alpha-D-muramoyl-L-alanyl-D-glutamyl-meso-2,6-diaminopimeloyl-D-alanyl-D-alanine + UMP. It participates in cell wall biogenesis; peptidoglycan biosynthesis. Catalyzes the initial step of the lipid cycle reactions in the biosynthesis of the cell wall peptidoglycan: transfers peptidoglycan precursor phospho-MurNAc-pentapeptide from UDP-MurNAc-pentapeptide onto the lipid carrier undecaprenyl phosphate, yielding undecaprenyl-pyrophosphoryl-MurNAc-pentapeptide, known as lipid I. The polypeptide is Phospho-N-acetylmuramoyl-pentapeptide-transferase (Actinobacillus pleuropneumoniae serotype 7 (strain AP76)).